We begin with the raw amino-acid sequence, 244 residues long: Protein A47 (244 aa).

It belongs to the orthopoxvirus A47 protein family.

The chain is Protein A47 from Variola virus.